We begin with the raw amino-acid sequence, 464 residues long: Soluble pyridine nucleotide transhydrogenase (464 aa).

Asp-35–Cys-44 is an FAD binding site.

It belongs to the class-I pyridine nucleotide-disulfide oxidoreductase family. Requires FAD as cofactor.

It is found in the cytoplasm. The catalysed reaction is NAD(+) + NADPH = NADH + NADP(+). Functionally, conversion of NADPH, generated by peripheral catabolic pathways, to NADH, which can enter the respiratory chain for energy generation. In Azotobacter vinelandii (strain DJ / ATCC BAA-1303), this protein is Soluble pyridine nucleotide transhydrogenase.